Consider the following 889-residue polypeptide: 97 kDa heat shock protein (889 aa).

Disordered stretches follow at residues 504-622 and 812-889; these read EDAM…ATTD and FVCD…MELD. Over residues 549–585 the composition is skewed to basic and acidic residues; that stretch reads SADKEEQADNGSKETSKDSKDQTSESSKSDKESKDQN. A compositionally biased stretch (polar residues) spans 586-597; it reads SEGSKSDNSSTE. Residues 869–889 show a composition bias toward basic and acidic residues; that stretch reads ASKEGETKPDETKPDVEMELD.

This sequence belongs to the heat shock protein 70 family.

In terms of biological role, cell surface recognition protein that binds acrosome-reacted sperm and thereby mediates binding and subsequent fusion of the sperm and egg. This chain is 97 kDa heat shock protein, found in Strongylocentrotus purpuratus (Purple sea urchin).